Consider the following 469-residue polypeptide: UDP-N-acetylmuramate--L-alanine ligase (469 aa).

113–119 (GTHGKTT) is a binding site for ATP.

It belongs to the MurCDEF family.

The protein localises to the cytoplasm. The enzyme catalyses UDP-N-acetyl-alpha-D-muramate + L-alanine + ATP = UDP-N-acetyl-alpha-D-muramoyl-L-alanine + ADP + phosphate + H(+). It participates in cell wall biogenesis; peptidoglycan biosynthesis. Its function is as follows. Cell wall formation. The protein is UDP-N-acetylmuramate--L-alanine ligase of Neisseria meningitidis serogroup B (strain ATCC BAA-335 / MC58).